The chain runs to 302 residues: RNA polymerase II holoenzyme cyclin-like subunit (302 aa).

One can recognise a Cyclin N-terminal domain in the interval 53-142; that stretch reads QQLIKLGKRM…LGECEFSLIS (90 aa).

It belongs to the cyclin family. Cyclin C subfamily. In terms of assembly, component of the srb8-11 complex, a regulatory module of the Mediator complex.

The protein localises to the nucleus. Component of the srb8-11 complex. The srb8-11 complex is a regulatory module of the Mediator complex which is itself involved in regulation of basal and activated RNA polymerase II-dependent transcription. The srb8-11 complex may be involved in the transcriptional repression of a subset of genes regulated by Mediator. It may inhibit the association of the Mediator complex with RNA polymerase II to form the holoenzyme complex. The srb8-11 complex phosphorylates the C-terminal domain (CTD) of the largest subunit of RNA polymerase II. The sequence is that of RNA polymerase II holoenzyme cyclin-like subunit (ssn8) from Aspergillus fumigatus (strain ATCC MYA-4609 / CBS 101355 / FGSC A1100 / Af293) (Neosartorya fumigata).